A 351-amino-acid chain; its full sequence is Cell division protein FtsZ (351 aa).

Residues 31–35 (GAGNN), 118–120 (GTG), Glu149, Arg153, and Asp197 contribute to the GTP site.

Belongs to the FtsZ family. Homodimer. Polymerizes to form a dynamic ring structure in a strictly GTP-dependent manner. Interacts directly with several other division proteins. Interacts with FtsA.

It is found in the cytoplasm. Essential cell division protein that forms a contractile ring structure (Z ring) at the future cell division site. The regulation of the ring assembly controls the timing and the location of cell division. One of the functions of the FtsZ ring is to recruit other cell division proteins to the septum to produce a new cell wall between the dividing cells. Binds GTP and shows GTPase activity. This Thermotoga maritima (strain ATCC 43589 / DSM 3109 / JCM 10099 / NBRC 100826 / MSB8) protein is Cell division protein FtsZ.